The sequence spans 757 residues: Glutathione biosynthesis bifunctional protein GshAB (757 aa).

Positions 1-337 (MKIQHIIHEN…LGKARLAEVA (337 aa)) are glutamate--cysteine ligase. One can recognise an ATP-grasp domain in the interval 494–753 (KKVLQKAGFN…LTQNVIKMLF (260 aa)). ATP is bound at residue 521 to 580 (ALFENRAVVIKPKSTNYGLGITIFQQGVQNREDFAKALEIAFREDKEVMVEDYLVGTEYR). Residues Asp-702, Glu-723, and Asn-725 each contribute to the Mg(2+) site. Mn(2+) contacts are provided by Asp-702, Glu-723, and Asn-725.

This sequence in the N-terminal section; belongs to the glutamate--cysteine ligase type 1 family. Type 2 subfamily. In terms of assembly, monomer. It depends on Mg(2+) as a cofactor. The cofactor is Mn(2+).

It catalyses the reaction L-cysteine + L-glutamate + ATP = gamma-L-glutamyl-L-cysteine + ADP + phosphate + H(+). The enzyme catalyses gamma-L-glutamyl-L-cysteine + glycine + ATP = glutathione + ADP + phosphate + H(+). It functions in the pathway sulfur metabolism; glutathione biosynthesis; glutathione from L-cysteine and L-glutamate: step 1/2. The protein operates within sulfur metabolism; glutathione biosynthesis; glutathione from L-cysteine and L-glutamate: step 2/2. Functionally, synthesizes glutathione from L-glutamate and L-cysteine via gamma-L-glutamyl-L-cysteine. The chain is Glutathione biosynthesis bifunctional protein GshAB from Pasteurella multocida (strain Pm70).